The sequence spans 530 residues: Ubiquitin carboxyl-terminal hydrolase 17-like protein 21 (530 aa).

The 296-residue stretch at alanine 80–lysine 375 folds into the USP domain. Cysteine 89 functions as the Nucleophile in the catalytic mechanism. Histidine 334 serves as the catalytic Proton acceptor. 2 stretches are compositionally biased toward basic and acidic residues: residues serine 382–arginine 392 and aspartate 398–histidine 412. 2 disordered regions span residues serine 382 to histidine 412 and asparagine 477 to glutamine 530. The segment covering threonine 493–leucine 505 has biased composition (polar residues). Positions glycine 510–arginine 524 are enriched in basic residues.

It belongs to the peptidase C19 family. USP17 subfamily.

The protein resides in the nucleus. Its subcellular location is the endoplasmic reticulum. The catalysed reaction is Thiol-dependent hydrolysis of ester, thioester, amide, peptide and isopeptide bonds formed by the C-terminal Gly of ubiquitin (a 76-residue protein attached to proteins as an intracellular targeting signal).. Functionally, deubiquitinating enzyme that removes conjugated ubiquitin from specific proteins to regulate different cellular processes that may include cell proliferation, progression through the cell cycle, apoptosis, cell migration, and the cellular response to viral infection. The polypeptide is Ubiquitin carboxyl-terminal hydrolase 17-like protein 21 (USP17L21) (Homo sapiens (Human)).